The sequence spans 78 residues: Protein SlyX homolog (78 aa).

The protein belongs to the SlyX family.

This chain is Protein SlyX homolog, found in Xanthomonas euvesicatoria pv. vesicatoria (strain 85-10) (Xanthomonas campestris pv. vesicatoria).